We begin with the raw amino-acid sequence, 340 residues long: MILSIESSCDDSSLALTRIKDAQLIAHFKISQEKHHSSYGGVVPELASRLHAENLPLLLERIKISLNKDFSKIKAIAITNQPGLSVTLIEGLMMAKALSLSLNLPLILEDHLRGHVYSLFINEKQTCMPLSVLLVSGGHSLILEARDYENIKIVATSLDDSFGESFDKVSKMLDLGYPGGPIVEKLALDYRHPNEPLMFPVPLKNSPNLAFSFSGLKNAVRLEVEKNAPNLNDEVKQKIGYHFQSAAIEHLIQQTKRYFKTKRPKIFGIVGGASQNLALRKAFENLCDAFDCKLVLAPLEFCSDNAAMIGRSSLEAYQKKRFVPLEKANISPRTLLKSFE.

The Fe cation site is built by H111 and H115. Residues 134–138, D167, G180, and N276 each bind substrate; that span reads LVSGG. Residue D304 participates in Fe cation binding.

The protein belongs to the KAE1 / TsaD family. Requires Fe(2+) as cofactor.

The protein resides in the cytoplasm. The enzyme catalyses L-threonylcarbamoyladenylate + adenosine(37) in tRNA = N(6)-L-threonylcarbamoyladenosine(37) in tRNA + AMP + H(+). Its function is as follows. Required for the formation of a threonylcarbamoyl group on adenosine at position 37 (t(6)A37) in tRNAs that read codons beginning with adenine. Is involved in the transfer of the threonylcarbamoyl moiety of threonylcarbamoyl-AMP (TC-AMP) to the N6 group of A37, together with TsaE and TsaB. TsaD likely plays a direct catalytic role in this reaction. This chain is tRNA N6-adenosine threonylcarbamoyltransferase, found in Helicobacter pylori (strain P12).